The primary structure comprises 227 residues: MAYPMQLGFQDATSPIMEELLHFHDHTLMIVFLISSLVLYIISLMLTTKLTHTSTMDAQEVETVWTILPAIILIMIALPSLRILYMMDEINNPSLTVKTMGHQWYWSYEYTDYEDLSFDSYMIPTSELKPGELRLLEVDNRVVLPMEMTIRMLISSEDVLHSWAVPSLGLKTDAIPGRLNQTTLMSTRPGLFYGQCSEICGSNHSFMPIVLELVPLKYFEKWSASML.

The Mitochondrial intermembrane portion of the chain corresponds to 1–14; that stretch reads MAYPMQLGFQDATS. Residues 15–45 traverse the membrane as a helical segment; sequence PIMEELLHFHDHTLMIVFLISSLVLYIISLM. The Mitochondrial matrix segment spans residues 46-59; sequence LTTKLTHTSTMDAQ. Residues 60-87 traverse the membrane as a helical segment; that stretch reads EVETVWTILPAIILIMIALPSLRILYMM. Residues 88-227 are Mitochondrial intermembrane-facing; sequence DEINNPSLTV…YFEKWSASML (140 aa). Cu cation contacts are provided by histidine 161, cysteine 196, glutamate 198, cysteine 200, histidine 204, and methionine 207. Glutamate 198 is a Mg(2+) binding site. Phosphotyrosine is present on tyrosine 218.

It belongs to the cytochrome c oxidase subunit 2 family. In terms of assembly, component of the cytochrome c oxidase (complex IV, CIV), a multisubunit enzyme composed of 14 subunits. The complex is composed of a catalytic core of 3 subunits MT-CO1, MT-CO2 and MT-CO3, encoded in the mitochondrial DNA, and 11 supernumerary subunits COX4I, COX5A, COX5B, COX6A, COX6B, COX6C, COX7A, COX7B, COX7C, COX8 and NDUFA4, which are encoded in the nuclear genome. The complex exists as a monomer or a dimer and forms supercomplexes (SCs) in the inner mitochondrial membrane with NADH-ubiquinone oxidoreductase (complex I, CI) and ubiquinol-cytochrome c oxidoreductase (cytochrome b-c1 complex, complex III, CIII), resulting in different assemblies (supercomplex SCI(1)III(2)IV(1) and megacomplex MCI(2)III(2)IV(2)). Found in a complex with TMEM177, COA6, COX18, COX20, SCO1 and SCO2. Interacts with TMEM177 in a COX20-dependent manner. Interacts with COX20. Interacts with COX16. It depends on Cu cation as a cofactor.

The protein resides in the mitochondrion inner membrane. It carries out the reaction 4 Fe(II)-[cytochrome c] + O2 + 8 H(+)(in) = 4 Fe(III)-[cytochrome c] + 2 H2O + 4 H(+)(out). Functionally, component of the cytochrome c oxidase, the last enzyme in the mitochondrial electron transport chain which drives oxidative phosphorylation. The respiratory chain contains 3 multisubunit complexes succinate dehydrogenase (complex II, CII), ubiquinol-cytochrome c oxidoreductase (cytochrome b-c1 complex, complex III, CIII) and cytochrome c oxidase (complex IV, CIV), that cooperate to transfer electrons derived from NADH and succinate to molecular oxygen, creating an electrochemical gradient over the inner membrane that drives transmembrane transport and the ATP synthase. Cytochrome c oxidase is the component of the respiratory chain that catalyzes the reduction of oxygen to water. Electrons originating from reduced cytochrome c in the intermembrane space (IMS) are transferred via the dinuclear copper A center (CU(A)) of subunit 2 and heme A of subunit 1 to the active site in subunit 1, a binuclear center (BNC) formed by heme A3 and copper B (CU(B)). The BNC reduces molecular oxygen to 2 water molecules using 4 electrons from cytochrome c in the IMS and 4 protons from the mitochondrial matrix. The sequence is that of Cytochrome c oxidase subunit 2 (MT-CO2) from Capra hircus (Goat).